A 238-amino-acid polypeptide reads, in one-letter code: Ribose-5-phosphate isomerase A (238 aa).

Residues 30 to 33, 87 to 90, and 100 to 103 contribute to the substrate site; these read SGST, DGAD, and KGGG. Glu109 serves as the catalytic Proton acceptor. Residue Lys127 participates in substrate binding.

The protein belongs to the ribose 5-phosphate isomerase family. As to quaternary structure, homodimer.

The catalysed reaction is aldehydo-D-ribose 5-phosphate = D-ribulose 5-phosphate. The protein operates within carbohydrate degradation; pentose phosphate pathway; D-ribose 5-phosphate from D-ribulose 5-phosphate (non-oxidative stage): step 1/1. Functionally, catalyzes the reversible conversion of ribose-5-phosphate to ribulose 5-phosphate. The chain is Ribose-5-phosphate isomerase A from Synechococcus sp. (strain WH7803).